The following is a 333-amino-acid chain: Geminin coiled-coil domain-containing protein 1 (333 aa).

Positions 83–118 (QLYRNKQLQDTLLQKEEELARLHEENNHLRQYLNST) form a coiled coil. Basic residues predominate over residues 145 to 154 (KEKRKPKEHR). The interval 145–165 (KEKRKPKEHRHSPAEIPQFKT) is disordered.

This sequence belongs to the GEMC1 family. Highly phosphorylated by CDK2; stimulates initiation of DNA replication.

The protein resides in the nucleus. Functionally, regulator of DNA replication. Promotes initiation of chromosomal DNA replication by mediating TOPBP1- and CDK2-dependent recruitment of CDC45L onto replication origins. This is Geminin coiled-coil domain-containing protein 1 (Gmnc) from Mus musculus (Mouse).